The chain runs to 255 residues: H-2 class II histocompatibility antigen, E-U alpha chain (255 aa).

The first 25 residues, 1–25 (MATIGALLLRFFFIAVLMSSQKSWA), serve as a signal peptide directing secretion. An alpha-1 region spans residues 26–109 (IKEEHTIIQA…KRSNNTPDAN (84 aa)). Residues 26–217 (IKEEHTIIQA…KTLLPETKEN (192 aa)) are Extracellular-facing. Positions 110–203 (VAPEVTVLSR…GLEEPLRKHW (94 aa)) are alpha-2. Positions 112 to 204 (PEVTVLSRSP…LEEPLRKHWE (93 aa)) constitute an Ig-like C1-type domain. A disulfide bridge links cysteine 132 with cysteine 188. Asparagine 143 carries an N-linked (GlcNAc...) asparagine glycan. The interval 204–216 (EFEEKTLLPETKE) is connecting peptide. The helical transmembrane segment at 218–238 (VVCALGLFVGLVGIVVGIILI) threads the bilayer. At 239–255 (MKGIKKRNVVERRQGAL) the chain is on the cytoplasmic side.

Belongs to the MHC class II family.

It is found in the membrane. This Mus musculus (Mouse) protein is H-2 class II histocompatibility antigen, E-U alpha chain (H2-Ea).